Here is a 308-residue protein sequence, read N- to C-terminus: Porphobilinogen deaminase (308 aa).

At cysteine 240 the chain carries S-(dipyrrolylmethanemethyl)cysteine.

It belongs to the HMBS family. Monomer. The cofactor is dipyrromethane.

The enzyme catalyses 4 porphobilinogen + H2O = hydroxymethylbilane + 4 NH4(+). Its pathway is porphyrin-containing compound metabolism; protoporphyrin-IX biosynthesis; coproporphyrinogen-III from 5-aminolevulinate: step 2/4. In terms of biological role, tetrapolymerization of the monopyrrole PBG into the hydroxymethylbilane pre-uroporphyrinogen in several discrete steps. The polypeptide is Porphobilinogen deaminase (Desulfitobacterium hafniense (strain DSM 10664 / DCB-2)).